Consider the following 350-residue polypeptide: Protein RecA (350 aa).

68 to 75 (GPESSGKT) provides a ligand contact to ATP.

This sequence belongs to the RecA family.

The protein resides in the cytoplasm. Functionally, can catalyze the hydrolysis of ATP in the presence of single-stranded DNA, the ATP-dependent uptake of single-stranded DNA by duplex DNA, and the ATP-dependent hybridization of homologous single-stranded DNAs. It interacts with LexA causing its activation and leading to its autocatalytic cleavage. This is Protein RecA from Mycolicibacterium vanbaalenii (strain DSM 7251 / JCM 13017 / BCRC 16820 / KCTC 9966 / NRRL B-24157 / PYR-1) (Mycobacterium vanbaalenii).